The chain runs to 662 residues: Chaperone protein HtpG (662 aa).

Residues 1-352 (MSKQTLSFQA…SADLPLNVSR (352 aa)) form an a; substrate-binding region. Residues 353–594 (ELLQESRDVR…GDGMSTQLAR (242 aa)) form a b region. The tract at residues 382–402 (HDRHDSPAPQPAEGADRVSDV) is disordered. The tract at residues 595 to 662 (LLKQAGQQAP…YVKRVNALLV (68 aa)) is c.

It belongs to the heat shock protein 90 family. Homodimer.

The protein resides in the cytoplasm. Its function is as follows. Molecular chaperone. Has ATPase activity. The protein is Chaperone protein HtpG of Verminephrobacter eiseniae (strain EF01-2).